The chain runs to 352 residues: UDP-N-acetylglucosamine--N-acetylmuramyl-(pentapeptide) pyrophosphoryl-undecaprenol N-acetylglucosamine transferase (352 aa).

Residues Ser195 and Gln287 each coordinate UDP-N-acetyl-alpha-D-glucosamine.

Belongs to the glycosyltransferase 28 family. MurG subfamily.

The protein localises to the cell membrane. It carries out the reaction Mur2Ac(oyl-L-Ala-gamma-D-Glu-L-Lys-D-Ala-D-Ala)-di-trans,octa-cis-undecaprenyl diphosphate + UDP-N-acetyl-alpha-D-glucosamine = beta-D-GlcNAc-(1-&gt;4)-Mur2Ac(oyl-L-Ala-gamma-D-Glu-L-Lys-D-Ala-D-Ala)-di-trans,octa-cis-undecaprenyl diphosphate + UDP + H(+). It participates in cell wall biogenesis; peptidoglycan biosynthesis. Functionally, cell wall formation. Catalyzes the transfer of a GlcNAc subunit on undecaprenyl-pyrophosphoryl-MurNAc-pentapeptide (lipid intermediate I) to form undecaprenyl-pyrophosphoryl-MurNAc-(pentapeptide)GlcNAc (lipid intermediate II). In Streptococcus pneumoniae serotype 4 (strain ATCC BAA-334 / TIGR4), this protein is UDP-N-acetylglucosamine--N-acetylmuramyl-(pentapeptide) pyrophosphoryl-undecaprenol N-acetylglucosamine transferase.